Reading from the N-terminus, the 419-residue chain is tRNA modification GTPase MnmE (419 aa).

(6S)-5-formyl-5,6,7,8-tetrahydrofolate is bound by residues arginine 2, glutamate 59, and arginine 99. The 147-residue stretch at 197-343 (GLSVVIAGPP…LHTMIVEMAR (147 aa)) folds into the TrmE-type G domain. A K(+)-binding site is contributed by asparagine 207. GTP is bound by residues 207 to 212 (NAGKST), 226 to 232 (SPVAGTT), and 251 to 254 (DTAG). Serine 211 contributes to the Mg(2+) binding site. 3 residues coordinate K(+): serine 226, valine 228, and threonine 231. Mg(2+) is bound at residue threonine 232. (6S)-5-formyl-5,6,7,8-tetrahydrofolate is bound at residue lysine 419.

This sequence belongs to the TRAFAC class TrmE-Era-EngA-EngB-Septin-like GTPase superfamily. TrmE GTPase family. Homodimer. Heterotetramer of two MnmE and two MnmG subunits. The cofactor is K(+).

It localises to the cytoplasm. Functionally, exhibits a very high intrinsic GTPase hydrolysis rate. Involved in the addition of a carboxymethylaminomethyl (cmnm) group at the wobble position (U34) of certain tRNAs, forming tRNA-cmnm(5)s(2)U34. The sequence is that of tRNA modification GTPase MnmE from Sphingopyxis alaskensis (strain DSM 13593 / LMG 18877 / RB2256) (Sphingomonas alaskensis).